Consider the following 167-residue polypeptide: MLCFERRLPSDTPADLEMAFTFEQRERSRLRFPLPDGREAAFLIERGAPLVEGERLGTAEGLVLAIQAKPELLMEVRTSDPLTLVRAAYHLGNRHVRLEIGAHWLRLPPDYVLRDMLMRLGVEVFEVTAPYQPESGAYGGGHHHSHSHHEGDEFHSKPRLHHFGGSQ.

The interval 135-167 (SGAYGGGHHHSHSHHEGDEFHSKPRLHHFGGSQ) is disordered. A compositionally biased stretch (basic residues) spans 157–167 (KPRLHHFGGSQ).

This sequence belongs to the UreE family.

The protein resides in the cytoplasm. Functionally, involved in urease metallocenter assembly. Binds nickel. Probably functions as a nickel donor during metallocenter assembly. This Nitrosococcus oceani (strain ATCC 19707 / BCRC 17464 / JCM 30415 / NCIMB 11848 / C-107) protein is Urease accessory protein UreE.